We begin with the raw amino-acid sequence, 397 residues long: Chorismate synthase (397 aa).

NADP(+) contacts are provided by R40 and R46. Residues 129 to 131 (RSS), 257 to 258 (QA), G302, 317 to 321 (KPISS), and R343 contribute to the FMN site.

The protein belongs to the chorismate synthase family. In terms of assembly, homotetramer. The cofactor is FMNH2.

The catalysed reaction is 5-O-(1-carboxyvinyl)-3-phosphoshikimate = chorismate + phosphate. Its pathway is metabolic intermediate biosynthesis; chorismate biosynthesis; chorismate from D-erythrose 4-phosphate and phosphoenolpyruvate: step 7/7. Catalyzes the anti-1,4-elimination of the C-3 phosphate and the C-6 proR hydrogen from 5-enolpyruvylshikimate-3-phosphate (EPSP) to yield chorismate, which is the branch point compound that serves as the starting substrate for the three terminal pathways of aromatic amino acid biosynthesis. This reaction introduces a second double bond into the aromatic ring system. This chain is Chorismate synthase, found in Chlorobium phaeobacteroides (strain DSM 266 / SMG 266 / 2430).